We begin with the raw amino-acid sequence, 356 residues long: tRNA N6-adenosine threonylcarbamoyltransferase (356 aa).

Residues histidine 131 and histidine 135 each coordinate Fe cation. Residues 154 to 158 (LVSGG), aspartate 187, glycine 200, and asparagine 289 contribute to the substrate site. Aspartate 317 provides a ligand contact to Fe cation.

It belongs to the KAE1 / TsaD family. Requires Fe(2+) as cofactor.

The protein localises to the cytoplasm. The enzyme catalyses L-threonylcarbamoyladenylate + adenosine(37) in tRNA = N(6)-L-threonylcarbamoyladenosine(37) in tRNA + AMP + H(+). In terms of biological role, required for the formation of a threonylcarbamoyl group on adenosine at position 37 (t(6)A37) in tRNAs that read codons beginning with adenine. Is involved in the transfer of the threonylcarbamoyl moiety of threonylcarbamoyl-AMP (TC-AMP) to the N6 group of A37, together with TsaE and TsaB. TsaD likely plays a direct catalytic role in this reaction. This chain is tRNA N6-adenosine threonylcarbamoyltransferase, found in Ruthia magnifica subsp. Calyptogena magnifica.